Here is a 600-residue protein sequence, read N- to C-terminus: Spastin (600 aa).

Residues 1–39 (MNSPGGRNDKKKPVTPAAETGPGSPTTPPSTETQVVLAP) are disordered. Residues 1–53 (MNSPGGRNDKKKPVTPAAETGPGSPTTPPSTETQVVLAPPSPHKRNLHLFSYP) lie on the Cytoplasmic side of the membrane. Residues 15–33 (TPAAETGPGSPTTPPSTET) are compositionally biased toward low complexity. Residues 54 to 74 (LLAVFSLLRFLAFQLGLLFVW) constitute an intramembrane region (helical). At 75–600 (CCELLSRSVM…WNQDFGDTTV (526 aa)) the chain is on the cytoplasmic side. The region spanning 110-185 (YHQQAFQYIS…IMAKDRLQLL (76 aa)) is the MIT domain. A disordered region spans residues 213–294 (GLLKPEKGAV…KPATPTTAVR (82 aa)). The span at 216–228 (KPEKGAVPKKKDP) shows a compositional bias: basic and acidic residues. Positions 253–291 (PNCTSVPTSARQAGAHTPSNRGATGKNNTRTNKPATPTT) are enriched in polar residues. 366–373 (GPPGNGKT) is an ATP binding site.

Belongs to the AAA ATPase family. Spastin subfamily. In terms of assembly, homohexamer. The homohexamer is stabilized by ATP-binding. The homohexamer may adopt a ring conformation through which microtubules pass prior to being severed. Interacts with microtubules.

The protein resides in the membrane. The protein localises to the cytoplasm. Its subcellular location is the cytoskeleton. It localises to the microtubule organizing center. It is found in the centrosome. The protein resides in the perinuclear region. The protein localises to the nucleus. The catalysed reaction is n ATP + n H2O + a microtubule = n ADP + n phosphate + (n+1) alpha/beta tubulin heterodimers.. Functionally, ATP-dependent microtubule severing protein that specifically recognizes and cuts microtubules that are polyglutamylated. Preferentially recognizes and acts on microtubules decorated with short polyglutamate tails: severing activity increases as the number of glutamates per tubulin rises from one to eight, but decreases beyond this glutamylation threshold. Microtubule severing promotes reorganization of cellular microtubule arrays and the release of microtubules from the centrosome following nucleation. Required for membrane traffic from the endoplasmic reticulum (ER) to the Golgi and for completion of the abscission stage of cytokinesis. Also plays a role in axon growth and the formation of axonal branches. In Xenopus laevis (African clawed frog), this protein is Spastin.